We begin with the raw amino-acid sequence, 634 residues long: MINIRFPDGSIREFEAGVNSLDVAKSISPSLAKATVAAYIDDQLKDAKDAINSNCELRLITVKDPEGLEILRHSCAHLLAHAVKELYPSTEVTIGPVVDNGFYYDFSFKESIGEADLPTIEKKMKELAKKSAPVSYRVVPKAEAIEFFKAQGENYKVEIIDSIADEQVKIYTQDNFSDLCRGPHIPNTSVLKAFKLTKLAGAYWRGNSDNEMLTRIYGTCWATKEDLEQYLNMLEEAEKRDHRKIGKVLDLFHFQEDSPGIAFWHDNGVRIWRQVEDYMRASNNKYGCSEIRTPLIADFSLWQKSGHASKYAENMFATKSENRDFAIRPMNCPTCVQVYNTKLHSYRDLPIRMAEFGIVHRNEPSGSLHGLLRVRSFTQDDGHIFCTPEQVEEEVILMVQQCFEVYKDFGFNDFAVKIALRPENRIGDDETWDKSEQMLKNALDANNVSYELLPGEGAFYGPKIEFHLKDAIGRSWQCGTIQLDFSMPQRLGATYIDKNGEKQVPVMLHRAIVGSLERFIGMLIEHYAGNLPLWLAPVQVAVMGISNNQDDYCKEVFTMLEKNGIRAKLDLRNEKIGFKIREHTLLRVPYLVILGKNEQEQKIITIRKHSGEDLGQMSVDDFCAFLDKQIQAKE.

The region spanning 1-61 (MINIRFPDGS…NSNCELRLIT (61 aa)) is the TGS domain. The segment at 241 to 532 (DHRKIGKVLD…LIEHYAGNLP (292 aa)) is catalytic. Positions 332, 383, and 509 each coordinate Zn(2+).

This sequence belongs to the class-II aminoacyl-tRNA synthetase family. Homodimer. Zn(2+) serves as cofactor.

The protein resides in the cytoplasm. The catalysed reaction is tRNA(Thr) + L-threonine + ATP = L-threonyl-tRNA(Thr) + AMP + diphosphate + H(+). Catalyzes the attachment of threonine to tRNA(Thr) in a two-step reaction: L-threonine is first activated by ATP to form Thr-AMP and then transferred to the acceptor end of tRNA(Thr). Also edits incorrectly charged L-seryl-tRNA(Thr). The sequence is that of Threonine--tRNA ligase from Francisella tularensis subsp. novicida (strain U112).